A 116-amino-acid polypeptide reads, in one-letter code: M-zodatoxin-Lt6a/c (116 aa).

Residues 1–22 (MKYFVVALTLAVAFVCIEECKT) form the signal peptide. 2 consecutive propeptides follow at residues 23-44 (VEIG…DEAR) and 80-83 (EEAR). Short sequence motifs (processing quadruplet motif) lie at residues 41 to 44 (DEAR) and 80 to 83 (EEAR). At Gln84 the chain carries Pyrrolidone carboxylic acid.

This sequence belongs to the cationic peptide 03 (latarcin) family. 06 subfamily. In terms of processing, cleavage of the propeptide depends on the processing quadruplet motif (XXXR, with at least one of X being E). As to expression, expressed by the venom gland.

It localises to the secreted. Does not have antimicrobial activity against Gram-positive bacteria (A.globiformis VKM Ac-1112 (MIC&gt;70 uM) and B.subtilis VKM B-501 (MIC&gt;70 uM)), Gram-negative bacteria (E.coli DH5-alpha (MIC&gt;70 uM), E.coli MH1 (MIC&gt;70 uM) and P.aeruginosa PAO1 (MIC&gt;70 uM)), yeast (P.pastoris GS115 (MIC&gt;70 uM) or S.cerevisiae Y190 (MIC&gt;70 uM)). Does not have hemolytic activity against rabbit erythrocytes. However, it causes some conductance changes in planar bilayer membranes, without membrane rupture, suggesting a cytolytic function on other biological targets. It causes paralysis, but is not lethal when injected into insect larvae. The chain is M-zodatoxin-Lt6a/c from Lachesana tarabaevi (Spider).